The primary structure comprises 750 residues: uncharacterized protein (750 aa).

3 helical membrane-spanning segments follow: residues M1–T21, Y465–L485, and G586–S606.

The protein resides in the membrane. This is an uncharacterized protein from Saccharomyces cerevisiae (strain ATCC 204508 / S288c) (Baker's yeast).